The following is an 89-amino-acid chain: Small ribosomal subunit protein uS15 (89 aa).

Belongs to the universal ribosomal protein uS15 family. Part of the 30S ribosomal subunit. Forms a bridge to the 50S subunit in the 70S ribosome, contacting the 23S rRNA.

Functionally, one of the primary rRNA binding proteins, it binds directly to 16S rRNA where it helps nucleate assembly of the platform of the 30S subunit by binding and bridging several RNA helices of the 16S rRNA. In terms of biological role, forms an intersubunit bridge (bridge B4) with the 23S rRNA of the 50S subunit in the ribosome. This Lactobacillus johnsonii (strain CNCM I-12250 / La1 / NCC 533) protein is Small ribosomal subunit protein uS15.